Consider the following 193-residue polypeptide: Cilia- and flagella-associated protein 20 (193 aa).

Belongs to the CFAP20 family. In terms of assembly, microtubule inner protein component of sperm flagellar doublet microtubules.

Its subcellular location is the nucleus. It is found in the cytoplasm. It localises to the cytoskeleton. The protein resides in the microtubule organizing center. The protein localises to the centrosome. Its subcellular location is the centriole. It is found in the cilium basal body. It localises to the cilium axoneme. The protein resides in the flagellum axoneme. Cilium- and flagellum-specific protein that plays a role in axonemal structure organization and motility. Microtubule inner protein (MIP) part of the dynein-decorated doublet microtubules (DMTs) in cilia axoneme, which is required for motile cilia beating. Involved in the regulation of the size and morphology of cilia. Required for axonemal microtubules polyglutamylation. The polypeptide is Cilia- and flagella-associated protein 20 (Homo sapiens (Human)).